The sequence spans 348 residues: Protein RecA (348 aa).

65 to 72 (GPESSGKT) provides a ligand contact to ATP. Over residues 326–336 (LLTPAEEKPET) the composition is skewed to basic and acidic residues. A disordered region spans residues 326 to 348 (LLTPAEEKPETDAAPEIEENEEF). Positions 338–348 (AAPEIEENEEF) are enriched in acidic residues.

It belongs to the RecA family.

It is found in the cytoplasm. Functionally, can catalyze the hydrolysis of ATP in the presence of single-stranded DNA, the ATP-dependent uptake of single-stranded DNA by duplex DNA, and the ATP-dependent hybridization of homologous single-stranded DNAs. It interacts with LexA causing its activation and leading to its autocatalytic cleavage. This is Protein RecA from Aliivibrio fischeri (strain ATCC 700601 / ES114) (Vibrio fischeri).